The following is a 124-amino-acid chain: Holo-[acyl-carrier-protein] synthase (124 aa).

Positions 5 and 56 each coordinate Mg(2+).

Belongs to the P-Pant transferase superfamily. AcpS family. Requires Mg(2+) as cofactor.

It localises to the cytoplasm. It catalyses the reaction apo-[ACP] + CoA = holo-[ACP] + adenosine 3',5'-bisphosphate + H(+). Functionally, transfers the 4'-phosphopantetheine moiety from coenzyme A to a Ser of acyl-carrier-protein. This is Holo-[acyl-carrier-protein] synthase from Campylobacter hominis (strain ATCC BAA-381 / DSM 21671 / CCUG 45161 / LMG 19568 / NCTC 13146 / CH001A).